We begin with the raw amino-acid sequence, 403 residues long: Tryptophan synthase beta chain (403 aa).

An N6-(pyridoxal phosphate)lysine modification is found at lysine 96.

This sequence belongs to the TrpB family. As to quaternary structure, tetramer of two alpha and two beta chains. The cofactor is pyridoxal 5'-phosphate.

It catalyses the reaction (1S,2R)-1-C-(indol-3-yl)glycerol 3-phosphate + L-serine = D-glyceraldehyde 3-phosphate + L-tryptophan + H2O. Its pathway is amino-acid biosynthesis; L-tryptophan biosynthesis; L-tryptophan from chorismate: step 5/5. The beta subunit is responsible for the synthesis of L-tryptophan from indole and L-serine. This is Tryptophan synthase beta chain from Ralstonia nicotianae (strain ATCC BAA-1114 / GMI1000) (Ralstonia solanacearum).